Consider the following 111-residue polypeptide: Large ribosomal subunit protein eL31 (111 aa).

It belongs to the eukaryotic ribosomal protein eL31 family.

The protein is Large ribosomal subunit protein eL31 (rpl31) of Dictyostelium discoideum (Social amoeba).